The primary structure comprises 750 residues: Photosystem I P700 chlorophyll a apoprotein A1 (750 aa).

A run of 8 helical transmembrane segments spans residues 70–93 (VFSAHFGQLSIIFLWLSGMYFHGA), 156–179 (LYCTAIGALVFSALMLFAGWFHYH), 195–219 (LNHHLAGLLGLGSLSWAGHQVHVSL), 291–309 (IAHHHLAIAILFLIAGHMY), 346–369 (WHAQLSLNLAMLGSLTIVVAHHMY), 385–411 (LSLFTHHMWIGGFLIVGAAAHAAIFMV), 433–455 (AIISHLNWVCIFLGFHSFGLYIH), and 531–549 (FLVHHIHAFTIHVTVLILL). Residues Cys573 and Cys582 each contribute to the [4Fe-4S] cluster site. Transmembrane regions (helical) follow at residues 589 to 610 (HVFLGLFWMYNAISVVIFHFSW) and 664 to 686 (LSAYGLFFLGAHFVWAFSLMFLF). Position 675 (His675) interacts with chlorophyll a'. The chlorophyll a site is built by Met683 and Tyr691. Residue Trp692 participates in phylloquinone binding. A helical membrane pass occupies residues 724–744 (AVGVTHYLLGGIATTWAFFLA).

Belongs to the PsaA/PsaB family. The PsaA/B heterodimer binds the P700 chlorophyll special pair and subsequent electron acceptors. PSI consists of a core antenna complex that captures photons, and an electron transfer chain that converts photonic excitation into a charge separation. The eukaryotic PSI reaction center is composed of at least 11 subunits. P700 is a chlorophyll a/chlorophyll a' dimer, A0 is one or more chlorophyll a, A1 is one or both phylloquinones and FX is a shared 4Fe-4S iron-sulfur center. is required as a cofactor.

It is found in the plastid. The protein localises to the chloroplast thylakoid membrane. It catalyses the reaction reduced [plastocyanin] + hnu + oxidized [2Fe-2S]-[ferredoxin] = oxidized [plastocyanin] + reduced [2Fe-2S]-[ferredoxin]. Its function is as follows. PsaA and PsaB bind P700, the primary electron donor of photosystem I (PSI), as well as the electron acceptors A0, A1 and FX. PSI is a plastocyanin-ferredoxin oxidoreductase, converting photonic excitation into a charge separation, which transfers an electron from the donor P700 chlorophyll pair to the spectroscopically characterized acceptors A0, A1, FX, FA and FB in turn. Oxidized P700 is reduced on the lumenal side of the thylakoid membrane by plastocyanin. The chain is Photosystem I P700 chlorophyll a apoprotein A1 from Lepidium virginicum (Virginia pepperweed).